We begin with the raw amino-acid sequence, 351 residues long: Phosphate acyltransferase (351 aa).

It belongs to the PlsX family. Homodimer. Probably interacts with PlsY.

The protein resides in the cytoplasm. It catalyses the reaction a fatty acyl-[ACP] + phosphate = an acyl phosphate + holo-[ACP]. The protein operates within lipid metabolism; phospholipid metabolism. In terms of biological role, catalyzes the reversible formation of acyl-phosphate (acyl-PO(4)) from acyl-[acyl-carrier-protein] (acyl-ACP). This enzyme utilizes acyl-ACP as fatty acyl donor, but not acyl-CoA. In Gloeothece citriformis (strain PCC 7424) (Cyanothece sp. (strain PCC 7424)), this protein is Phosphate acyltransferase.